A 553-amino-acid polypeptide reads, in one-letter code: Protein Early 65 kDa (553 aa).

It localises to the host cytoplasm. In terms of biological role, may participate in the recruitment of G-actin to the host nucleus. The chain is Protein Early 65 kDa (HE65) from Autographa californica nuclear polyhedrosis virus (AcMNPV).